A 1145-amino-acid chain; its full sequence is Protein STU1 (1145 aa).

HEAT repeat units lie at residues 96-134 and 168-206; these read TLPL…EKYV and YVPV…KSDL. Disordered stretches follow at residues 226–271, 510–793, and 816–839; these read ELIP…GIDT, LLNK…VVDP, and PEPV…PAAS. Residues 229–239 are compositionally biased toward low complexity; the sequence is PTSSRPETPAA. Polar residues predominate over residues 535–545; the sequence is SKSTMGTSKPS. Low complexity-rich tracts occupy residues 580-594, 663-676, and 696-708; these read TTTT…SGAR, ASHA…SPSS, and QSQS…SSPS.

This sequence belongs to the CLASP family. Interacts with microtubules.

It is found in the cytoplasm. Its subcellular location is the cytoskeleton. The protein resides in the nucleus. It localises to the spindle. Functionally, microtubule binding protein that promotes the stabilization of dynamic microtubules. Required for mitotic spindle formation. This chain is Protein STU1 (STU1), found in Gibberella zeae (strain ATCC MYA-4620 / CBS 123657 / FGSC 9075 / NRRL 31084 / PH-1) (Wheat head blight fungus).